Here is a 321-residue protein sequence, read N- to C-terminus: Glucokinase (321 aa).

8 to 13 is an ATP binding site; sequence GDVGGT.

The protein belongs to the bacterial glucokinase family.

It localises to the cytoplasm. The enzyme catalyses D-glucose + ATP = D-glucose 6-phosphate + ADP + H(+). The chain is Glucokinase from Escherichia coli O127:H6 (strain E2348/69 / EPEC).